A 372-amino-acid chain; its full sequence is Alpha-parvin (372 aa).

A compositionally biased stretch (low complexity) spans Met-1–Val-11. Residues Met-1–Glu-45 are disordered. Ala-2 is modified (N-acetylalanine). Phosphoserine occurs at positions 8, 14, and 19. Residues Pro-21–Lys-25 form an interaction with ARHGAP31 region. Phosphoserine is present on residues Ser-28 and Ser-62. 2 consecutive Calponin-homology (CH) domains span residues Gln-95 to Arg-202 and Asn-262 to Arg-369. The interval Gly-223–Glu-372 is required for interaction with TESK1 and ILK.

It belongs to the parvin family. Component of the heterotrimeric IPP (ILK-PINCH-PARVIN) complex composed of ILK, LIMS1/PINCH and PARVA; the complex binds to F-actin via the C-terminal tail of LIMS1 and the N-terminal region of PARVA, promoting F-actin filament bundling. Formation of the IPP complex is dependent on protein kinase C and precedes integrin-mediated cell adhesion and spreading. Interacts with TGFB1I1. Interacts with ARHGAP31. Interacts with the actin cytoskeleton. Interacts (via C-terminus) with TESK1 (via C-terminus); the interaction inhibits TESK1 kinase activity. Interacts with PXN/PAXILLIN (via LD motif 4). In terms of tissue distribution, widely expressed, with highest levels in heart, skeletal muscle, kidney and liver.

The protein localises to the cell junction. Its subcellular location is the focal adhesion. The protein resides in the cell membrane. It is found in the cytoplasm. It localises to the cytoskeleton. The protein localises to the myofibril. Its subcellular location is the sarcomere. The protein resides in the z line. Functionally, plays a role in sarcomere organization and in smooth muscle cell contraction. Required for normal development of the embryonic cardiovascular system, and for normal septation of the heart outflow tract. Plays a role in sprouting angiogenesis and is required for normal adhesion of vascular smooth muscle cells to endothelial cells during blood vessel development. Plays a role in the reorganization of the actin cytoskeleton, formation of lamellipodia and ciliogenesis. Plays a role in the establishment of cell polarity, cell adhesion, cell spreading, and directed cell migration. Within the IPP (ILK-PINCH-PARVIN) complex, binds to F-actin, promoting F-actin bundling, a process required to generate force for actin cytoskeleton reorganization and subsequent dynamic cell adhesion events such as cell spreading and migration. This Homo sapiens (Human) protein is Alpha-parvin (PARVA).